The chain runs to 920 residues: MNLLNLKNTLQTSLVIRLTFLFLLTTIIIWLLSVLTAAYISMVQKRQHIIEDLSVLSEMNIVLSNQRFEEAERDAKNLMYQCSLATEIHHNDIFPEVSRHLSVGPSNCTPTLNGEKHRLFLQSSDIDENSFRRDSFILNHKNEISLLSTDNPSDYSTLQPLTRKSFPLYPTHAGFYWSEPEYINGKGWHASVAVADQQGVFFEVTVKLPDLITKSHLPLDDSIRVWLDQNNHLLPFSYIPQKIRTQLENVTLHDGWQQIPGFLILRTTLHGPGWSLVTLYPYGNLHNRILKIILQQIPFTLTALVLMTSAFCWLLHRSLAKPLWRFVDVINKTATAPLSTRLPAQRLDELDSIAGAFNQLLDTLQVQYDNLENKVAERTQALNEAKKRAERANKRKSIHLTVISHELRTPMNGVLGAIELLQTTPLNIEQQGLADTARNCTLSLLAIINNLLDFSRIESGHFTLHMEETALLPLLDQAMQTIQGPAQSKKLSLRTFVGQHVPLYFHTDSIRLRQILVNLLGNAVKFTETGGIRLTVKRHEEQLIFLVSDSGKGIEIQQQSQIFTAFYQADTNSQGTGIGLTIASSLAKMMGGNLTLKSVPGVGTCVSLVLPLQEYQPPQPIKGTLSAPFCLHRQLACWGIRGEPPHQQNALLNAELLYFSGKLYDLAQQLILCTPNMPVINNLLPPWQLQILLVDDADINRDIIGKMLVSLGQHVTIAASSNEALTLSQQQRFDLVLIDIRMPEIDGIECVRLWHDEPNNLDPDCMFVALSASVATEDIHRCKKNGIHHYITKPVTLATLARYISIAAEYQLLRNIELQEQDPSRCSALLATDDMVINSKIFQSLDLLLADIENAVSAGEKIDQLIHTLKGCLGQIGQTELVCYVIDIENRVKMGKIIALEELTDLRQKIRMIFKNYTIT.

Residues 1–19 (MNLLNLKNTLQTSLVIRLT) lie on the Cytoplasmic side of the membrane. A helical transmembrane segment spans residues 20–40 (FLFLLTTIIIWLLSVLTAAYI). Residues 41 to 291 (SMVQKRQHII…YGNLHNRILK (251 aa)) lie on the Periplasmic side of the membrane. A helical membrane pass occupies residues 292–312 (IILQQIPFTLTALVLMTSAFC). At 313 to 920 (WLLHRSLAKP…RMIFKNYTIT (608 aa)) the chain is on the cytoplasmic side. Residues 317–369 (RSLAKPLWRFVDVINKTATAPLSTRLPAQRLDELDSIAGAFNQLLDTLQVQYD) form the HAMP domain. Residues 354–395 (AGAFNQLLDTLQVQYDNLENKVAERTQALNEAKKRAERANKR) are a coiled coil. The Histidine kinase domain occupies 402 to 614 (VISHELRTPM…CVSLVLPLQE (213 aa)). Positions 405 and 549 each coordinate ATP. Residue H405 is modified to Phosphohistidine; by autocatalysis. A Response regulatory domain is found at 690–808 (QILLVDDADI…TLARYISIAA (119 aa)). D739 carries the post-translational modification 4-aspartylphosphate.

In terms of processing, autophosphorylated.

It localises to the cell inner membrane. It carries out the reaction ATP + protein L-histidine = ADP + protein N-phospho-L-histidine.. Member of the two-component regulatory system SsrA/SsrB (SpiR/SsrB) that is required for intracellular proliferation and systemic dissemination within the host. When inside acidic Salmonella-containing vesicles (SCV) within host cells the SsrA sensor kinase autophosphorylates and the phosphoryl group is transferred to the response regulator SsrB; phosphorylated SsrB activates the expression of genes encoding virulence proteins, including pathogenicity island 2 (SPI2) and other horizontally acquired genes, and antagonizes the action of transcriptional repressor hns (H-NS). This is Sensor histidine kinase SsrA from Salmonella typhimurium (strain LT2 / SGSC1412 / ATCC 700720).